Consider the following 276-residue polypeptide: Octanoyltransferase LipM (276 aa).

A BPL/LPL catalytic domain is found at 32–247 (GALPPVIRFY…GFEKGLDIKL (216 aa)). Catalysis depends on Cys149, which acts as the Acyl-thioester intermediate.

Belongs to the octanoyltransferase LipM family. In terms of assembly, monomer.

It catalyses the reaction octanoyl-[ACP] + L-lysyl-[protein] = N(6)-octanoyl-L-lysyl-[protein] + holo-[ACP] + H(+). The protein operates within protein modification; protein lipoylation via endogenous pathway; protein N(6)-(lipoyl)lysine from octanoyl-[acyl-carrier-protein]. Its function is as follows. Catalyzes the transfer of endogenously produced octanoic acid from octanoyl-acyl-carrier-protein onto the lipoyl domain of GcvH, an intermediate carrier during protein lipoylation. This Macrococcus caseolyticus (strain JCSC5402) (Macrococcoides caseolyticum) protein is Octanoyltransferase LipM.